Consider the following 459-residue polypeptide: Type IV methyl-directed restriction enzyme EcoKMcrB subunit (459 aa).

GTP is bound by residues 201–208, 300–303, and 333–336; these read GPPGVGKT, DKRG, and NTAD.

Its function is as follows. Recognizes N4- and C5-methylcytosine (and 5-hydroxy-methylcytosines) produced by a broad range of DNA methylases and appears to act against 5-methylcytosine preceded by a purine residue. Binds to DNA containing methylated cytosines; also binds to GTP. Isoform 33 kDa is less active than isoform 51 kDa and may play a role in regulating the activity of isoform 51 kDa by competing with it in DNA and protein binding abilities. The sequence is that of Type IV methyl-directed restriction enzyme EcoKMcrB subunit (mcrB) from Escherichia coli (strain K12).